Consider the following 102-residue polypeptide: Small ribosomal subunit protein uS10 (102 aa).

It belongs to the universal ribosomal protein uS10 family. Part of the 30S ribosomal subunit.

Involved in the binding of tRNA to the ribosomes. This chain is Small ribosomal subunit protein uS10, found in Agrobacterium fabrum (strain C58 / ATCC 33970) (Agrobacterium tumefaciens (strain C58)).